A 93-amino-acid polypeptide reads, in one-letter code: UPF0250 protein PSPA7_1111 (93 aa).

Belongs to the UPF0250 family.

The protein is UPF0250 protein PSPA7_1111 of Pseudomonas paraeruginosa (strain DSM 24068 / PA7) (Pseudomonas aeruginosa (strain PA7)).